Here is a 212-residue protein sequence, read N- to C-terminus: Outer-membrane lipoprotein carrier protein (212 aa).

The first 25 residues, 1-25 (MRKRILVSACAALAVFAAHMPTALA), serve as a signal peptide directing secretion.

This sequence belongs to the LolA family. As to quaternary structure, monomer.

It is found in the periplasm. Functionally, participates in the translocation of lipoproteins from the inner membrane to the outer membrane. Only forms a complex with a lipoprotein if the residue after the N-terminal Cys is not an aspartate (The Asp acts as a targeting signal to indicate that the lipoprotein should stay in the inner membrane). This Cupriavidus pinatubonensis (strain JMP 134 / LMG 1197) (Cupriavidus necator (strain JMP 134)) protein is Outer-membrane lipoprotein carrier protein.